A 497-amino-acid chain; its full sequence is RNA polymerase sigma factor SigA (497 aa).

Disordered stretches follow at residues 1 to 20 and 62 to 86; these read MSTDKKTLGEKPNSTKPELS and KTLHENKESDVPKKRRGRKPKHAPL. The span at 63–73 shows a compositional bias: basic and acidic residues; that stretch reads TLHENKESDVP. Residues 74–84 are compositionally biased toward basic residues; the sequence is KKRRGRKPKHA. The segment at 250 to 320 is sigma-70 factor domain-2; sequence LVTSNLRLVV…TRAIADQART (71 aa). The short motif at 274–277 is the Interaction with polymerase core subunit RpoC element; the sequence is DLIQ. Positions 329 to 410 are sigma-70 factor domain-3; it reads ETINRLAKAE…DTDAQTPDEF (82 aa). The tract at residues 423–478 is sigma-70 factor domain-4; that stretch reads LLNNNLSEQEELIVRMRIGMPPYNEPKTLDEVGQKILIPREKIRQIENKAIRKLRH. A DNA-binding region (H-T-H motif) is located at residues 451 to 470; the sequence is LDEVGQKILIPREKIRQIEN.

It belongs to the sigma-70 factor family. RpoD/SigA subfamily. In terms of assembly, interacts transiently with the RNA polymerase catalytic core.

Its subcellular location is the cytoplasm. Its function is as follows. Sigma factors are initiation factors that promote the attachment of RNA polymerase to specific initiation sites and are then released. This sigma factor is the primary sigma factor during exponential growth. In Mycoplasma genitalium (strain ATCC 33530 / DSM 19775 / NCTC 10195 / G37) (Mycoplasmoides genitalium), this protein is RNA polymerase sigma factor SigA.